The sequence spans 353 residues: Serine proteinase inhibitor 1 (353 aa).

This sequence belongs to the serpin family. Poxviruses subfamily.

Its subcellular location is the host cytoplasm. Plays a role in mediating viral host range. May act to inhibit a caspase independent form of apoptosis to allow efficient virus replication in infected cells. The polypeptide is Serine proteinase inhibitor 1 (OPG208) (Vaccinia virus (strain Western Reserve) (VACV)).